The primary structure comprises 302 residues: Putative S-adenosyl-L-methionine-dependent methyltransferase MMAR_1068 (302 aa).

Residues Asp127 and 156–157 (DL) contribute to the S-adenosyl-L-methionine site.

It belongs to the UPF0677 family.

Exhibits S-adenosyl-L-methionine-dependent methyltransferase activity. In Mycobacterium marinum (strain ATCC BAA-535 / M), this protein is Putative S-adenosyl-L-methionine-dependent methyltransferase MMAR_1068.